The sequence spans 1420 residues: Mediator of RNA polymerase II transcription subunit 13 (1420 aa).

Phosphoserine is present on residues S370, S375, and S425. Residues 416–427 (TTVSNDLENSPL) show a composition bias toward polar residues. The interval 416–511 (TTVSNDLENS…TNESNKSISD (96 aa)) is disordered. Basic and acidic residues predominate over residues 429–439 (TELEANGRSLE). Residues 440 to 453 (KVNNSVSKTGSVDT) show a composition bias toward polar residues. The span at 454–484 (LHNKEGTLEQREQNENLPSDKSDSMVDKELF) shows a compositional bias: basic and acidic residues. Low complexity predominate over residues 494–508 (GDSNKSNSTNESNKS). At T601 the chain carries Phosphothreonine. Residue S608 is modified to Phosphoserine; by PKA. A Phosphoserine modification is found at S636. A disordered region spans residues 653–691 (LSSSEEEEDEEENGSSDEDLKSLNVRDDMKPSDNISTNT). The segment covering 655 to 669 (SSEEEEDEEENGSSD) has biased composition (acidic residues). Residues 670-683 (EDLKSLNVRDDMKP) show a composition bias toward basic and acidic residues. Position 748 is a phosphoserine (S748).

Belongs to the Mediator complex subunit 13 family. Component of the SRB8-11 complex which consists of SRB8, SSN2/SRB9, SSN3/SRB10 and SSN8/SRB11. The SRB8-11 complex associates with the Mediator complex. The SSN3/SRB10 and SSN8/SRB11 kinase-cyclin pair also associate with the RNA polymerase II holoenzyme. In terms of processing, phosphorylated. PKA-dependent phosphorylation at 'Ser-608' is enhanced by activation of the RAS signaling pathway.

The protein localises to the nucleus. In terms of biological role, component of the SRB8-11 complex. The SRB8-11 complex is a regulatory module of the Mediator complex which is itself involved in regulation of basal and activated RNA polymerase II-dependent transcription. The SRB8-11 complex may be involved in the transcriptional repression of a subset of genes regulated by Mediator. It may inhibit the association of the Mediator complex with RNA polymerase II to form the holoenzyme complex. The SRB8-11 complex phosphorylates the C-terminal domain (CTD) of the largest subunit of RNA polymerase II RPB1 at serines 2 and 5. In Saccharomyces cerevisiae (strain ATCC 204508 / S288c) (Baker's yeast), this protein is Mediator of RNA polymerase II transcription subunit 13 (SSN2).